Reading from the N-terminus, the 192-residue chain is Segregation and condensation protein B (192 aa).

It belongs to the ScpB family. In terms of assembly, homodimer. Homodimerization may be required to stabilize the binding of ScpA to the Smc head domains. Component of a cohesin-like complex composed of ScpA, ScpB and the Smc homodimer, in which ScpA and ScpB bind to the head domain of Smc. The presence of the three proteins is required for the association of the complex with DNA.

The protein localises to the cytoplasm. Its function is as follows. Participates in chromosomal partition during cell division. May act via the formation of a condensin-like complex containing Smc and ScpA that pull DNA away from mid-cell into both cell halves. This is Segregation and condensation protein B from Oceanobacillus iheyensis (strain DSM 14371 / CIP 107618 / JCM 11309 / KCTC 3954 / HTE831).